A 278-amino-acid chain; its full sequence is Large ribosomal subunit protein uL2 (278 aa).

Residues 222–278 (GVVMNPIDHPHGGGEGRTSGGRHPVTPWGKPTKGKKTRSNKSTDKFILISRHKRKKK) form a disordered region.

The protein belongs to the universal ribosomal protein uL2 family. Part of the 50S ribosomal subunit. Forms a bridge to the 30S subunit in the 70S ribosome.

In terms of biological role, one of the primary rRNA binding proteins. Required for association of the 30S and 50S subunits to form the 70S ribosome, for tRNA binding and peptide bond formation. It has been suggested to have peptidyltransferase activity; this is somewhat controversial. Makes several contacts with the 16S rRNA in the 70S ribosome. The protein is Large ribosomal subunit protein uL2 of Rhodopseudomonas palustris (strain ATCC BAA-98 / CGA009).